Consider the following 206-residue polypeptide: Large ribosomal subunit protein bL25 (206 aa).

The protein belongs to the bacterial ribosomal protein bL25 family. CTC subfamily. As to quaternary structure, part of the 50S ribosomal subunit; part of the 5S rRNA/L5/L18/L25 subcomplex. Contacts the 5S rRNA. Binds to the 5S rRNA independently of L5 and L18.

Functionally, this is one of the proteins that binds to the 5S RNA in the ribosome where it forms part of the central protuberance. The sequence is that of Large ribosomal subunit protein bL25 from Ralstonia nicotianae (strain ATCC BAA-1114 / GMI1000) (Ralstonia solanacearum).